The following is a 58-amino-acid chain: Large ribosomal subunit protein uL30 (58 aa).

Belongs to the universal ribosomal protein uL30 family. In terms of assembly, part of the 50S ribosomal subunit.

This chain is Large ribosomal subunit protein uL30, found in Buchnera aphidicola subsp. Baizongia pistaciae (strain Bp).